The following is a 343-amino-acid chain: NADH-quinone oxidoreductase subunit H (343 aa).

Transmembrane regions (helical) follow at residues 5 to 25, 76 to 96, 119 to 139, 158 to 178, 190 to 210, 243 to 263, 284 to 304, and 323 to 343; these read FIIE…LMAM, FLFV…SAVI, ALLY…IGGW, VSYE…TGTL, MNWN…CAFA, LFAE…LFFG, ILGF…YMWV, and ILIP…LLFK.

This sequence belongs to the complex I subunit 1 family. NDH-1 is composed of 14 different subunits. Subunits NuoA, H, J, K, L, M, N constitute the membrane sector of the complex.

The protein resides in the cell inner membrane. The enzyme catalyses a quinone + NADH + 5 H(+)(in) = a quinol + NAD(+) + 4 H(+)(out). Functionally, NDH-1 shuttles electrons from NADH, via FMN and iron-sulfur (Fe-S) centers, to quinones in the respiratory chain. The immediate electron acceptor for the enzyme in this species is believed to be ubiquinone. Couples the redox reaction to proton translocation (for every two electrons transferred, four hydrogen ions are translocated across the cytoplasmic membrane), and thus conserves the redox energy in a proton gradient. This subunit may bind ubiquinone. This Flavobacterium psychrophilum (strain ATCC 49511 / DSM 21280 / CIP 103535 / JIP02/86) protein is NADH-quinone oxidoreductase subunit H.